The following is a 521-amino-acid chain: Bifunctional dihydrofolate reductase-thymidylate synthase (521 aa).

The DHFR domain occupies 17–194 (NYQVVVAGTR…IRHSFVSFVR (178 aa)). Substrate is bound at residue valine 21. NADP(+)-binding positions include alanine 23 and 29-35 (GIGKDGV). Residue aspartate 43 participates in substrate binding. NADP(+)-binding positions include 67 to 69 (RKT) and 88 to 91 (LTRS). Residue isoleucine 130 coordinates substrate. 131–138 (GGGQVLRE) is an NADP(+) binding site. Residue threonine 151 coordinates substrate. The tract at residues 197-521 (KSVAETHESN…HQKIEMKMAV (325 aa)) is thymidylate synthase. Arginine 258 is a binding site for dUMP. Cysteine 403 is a catalytic residue. Residues histidine 404, 422 to 426 (QRSAD), asparagine 434, and 464 to 466 (HVY) contribute to the dUMP site.

This sequence in the N-terminal section; belongs to the dihydrofolate reductase family. It in the C-terminal section; belongs to the thymidylate synthase family.

The catalysed reaction is (6S)-5,6,7,8-tetrahydrofolate + NADP(+) = 7,8-dihydrofolate + NADPH + H(+). It catalyses the reaction dUMP + (6R)-5,10-methylene-5,6,7,8-tetrahydrofolate = 7,8-dihydrofolate + dTMP. Its pathway is cofactor biosynthesis; tetrahydrofolate biosynthesis; 5,6,7,8-tetrahydrofolate from 7,8-dihydrofolate: step 1/1. Its function is as follows. Bifunctional enzyme. Involved in de novo dTMP biosynthesis. Key enzyme in folate metabolism. Can play two different roles depending on the source of dihydrofolate: de novo synthesis of tetrahydrofolate or recycling of the dihydrofolate released as one of the end products of the TS catalyzed reaction. Catalyzes an essential reaction for de novo glycine and purine synthesis, DNA precursor synthesis, and for the conversion of dUMP to dTMP. In Zea mays (Maize), this protein is Bifunctional dihydrofolate reductase-thymidylate synthase (DRTS).